The primary structure comprises 547 residues: Probable hydroxyacid-oxoacid transhydrogenase, mitochondrial (547 aa).

This sequence belongs to the iron-containing alcohol dehydrogenase family. Hydroxyacid-oxoacid transhydrogenase subfamily.

It is found in the mitochondrion. It carries out the reaction (S)-3-hydroxybutanoate + 2-oxoglutarate = (R)-2-hydroxyglutarate + acetoacetate. The enzyme catalyses 4-hydroxybutanoate + 2-oxoglutarate = (R)-2-hydroxyglutarate + succinate semialdehyde. Catalyzes the cofactor-independent reversible oxidation of gamma-hydroxybutyrate (GHB) to succinic semialdehyde (SSA) coupled to reduction of 2-ketoglutarate (2-KG) to D-2-hydroxyglutarate (D-2-HG). L-3-hydroxybutyrate (L-3-OHB) is also a substrate for HOT when using 2-KG as hydrogen acceptor, resulting in the formation of D-2-HG. The protein is Probable hydroxyacid-oxoacid transhydrogenase, mitochondrial (adhfe1) of Dictyostelium discoideum (Social amoeba).